We begin with the raw amino-acid sequence, 124 residues long: Large ribosomal subunit protein eL22 (124 aa).

It belongs to the eukaryotic ribosomal protein eL22 family. In terms of assembly, component of the large ribosomal subunit. Mature ribosomes consist of a small (40S) and a large (60S) subunit. The 40S subunit contains about 32 different proteins and 1 molecule of RNA (18S). The 60S subunit contains 45 different proteins and 3 molecules of RNA (25S, 5.8S and 5S).

The protein localises to the cytoplasm. Component of the ribosome, a large ribonucleoprotein complex responsible for the synthesis of proteins in the cell. The small ribosomal subunit (SSU) binds messenger RNAs (mRNAs) and translates the encoded message by selecting cognate aminoacyl-transfer RNA (tRNA) molecules. The large subunit (LSU) contains the ribosomal catalytic site termed the peptidyl transferase center (PTC), which catalyzes the formation of peptide bonds, thereby polymerizing the amino acids delivered by tRNAs into a polypeptide chain. The nascent polypeptides leave the ribosome through a tunnel in the LSU and interact with protein factors that function in enzymatic processing, targeting, and the membrane insertion of nascent chains at the exit of the ribosomal tunnel. The protein is Large ribosomal subunit protein eL22 of Candida albicans (strain SC5314 / ATCC MYA-2876) (Yeast).